A 439-amino-acid polypeptide reads, in one-letter code: MSCSASGECKSTTATPVAPCDPDTCKKSTSTQPRKRFVGRANGSGPSASTSLVKNTTRRPRIINQIPDEILNDEELNEVIATTLPKNYNFEIHKSIWHIRKNNCKKIALQMPEGLLIYACIISDIIEQFCGPDISTVVMGDVTYGACCVDDFSAIALGCDFLIHYAHSCLVPIDSIKIKVLYVFVTIEIDTDHVVKSFKKNFETGTRMAMVGTIQFNPTIHTLKDRLLNEAGIVCTAPQIMPLSKGEVLGCTSANMSTEDYDMIMYIGDGRFHLESAMIHNPDIPAYRYDPYSRKLTREYFDQVEMVSVRKRAIQTAKNAKTIGLILGTLGRQGNTATLDMLQEKLNSKGYETHIVLLSEIFPAKLALFDGVDAWVQVACPRLSIDWGYAFPKPLLTPYEAMVMMDEDTLEGNDYPMDYYGKEGYGRGKQPRAKKEIAI.

Residues S11–K54 form a disordered region. Positions S44 to K54 are enriched in polar residues. Positions 147, 251, and 380 each coordinate [4Fe-4S] cluster.

It belongs to the DPH1/DPH2 family. DPH1 subfamily. In terms of assembly, component of the 2-(3-amino-3-carboxypropyl)histidine synthase complex composed of DPH1, DPH2, DPH3 and a NADH-dependent reductase, predominantly CBR1. [4Fe-4S] cluster serves as cofactor.

Its subcellular location is the cytoplasm. It carries out the reaction L-histidyl-[translation elongation factor 2] + S-adenosyl-L-methionine = 2-[(3S)-amino-3-carboxypropyl]-L-histidyl-[translation elongation factor 2] + S-methyl-5'-thioadenosine + H(+). It participates in protein modification; peptidyl-diphthamide biosynthesis. In terms of biological role, catalyzes the first step of diphthamide biosynthesis, a post-translational modification of histidine which occurs in elongation factor 2. DPH1 and DPH2 transfer a 3-amino-3-carboxypropyl (ACP) group from S-adenosyl-L-methionine (SAM) to a histidine residue, the reaction is assisted by a reduction system comprising DPH3 and a NADH-dependent reductase, predominantly CBR1. In Yarrowia lipolytica (strain CLIB 122 / E 150) (Yeast), this protein is 2-(3-amino-3-carboxypropyl)histidine synthase subunit 1 (DPH1).